A 160-amino-acid polypeptide reads, in one-letter code: Ureidoglycolate lyase (160 aa).

The protein belongs to the ureidoglycolate lyase family. Homodimer. Ni(2+) is required as a cofactor.

It catalyses the reaction (S)-ureidoglycolate = urea + glyoxylate. Its pathway is nitrogen metabolism; (S)-allantoin degradation. Functionally, catalyzes the catabolism of the allantoin degradation intermediate (S)-ureidoglycolate, generating urea and glyoxylate. Involved in the utilization of allantoin as nitrogen source. This chain is Ureidoglycolate lyase, found in Salmonella agona (strain SL483).